A 305-amino-acid polypeptide reads, in one-letter code: MLKQRTIKSLVKTVGIGLHSGRKVTLTLRPAPADTGIVFTRVDLPEAVEIPAAAGAIGDTRLASVLQKDGARVSTVEHLMSACAGLGIDNLYVDVDAEEIPIMDGSAASFVFLLQSAGIEQQNAAKRFIRVKKAVEVREGDKLARLEPFFGFKLSFTIDFRHPAVDKTGQNFEIDFADTSYVREIARARTFGFAHEVEALREMGLARGGSLDNAIVLDEHRMLNNEELRYGDEFVRHKILDAIGDLYVVGHPLIGAYVAHKSGHGLNNQLLRALLADQEAYEVVTFDRMEDAPVAFLPQVQPAFA.

Positions 78, 237, and 241 each coordinate Zn(2+). His-264 (proton donor) is an active-site residue.

It belongs to the LpxC family. It depends on Zn(2+) as a cofactor.

The enzyme catalyses a UDP-3-O-[(3R)-3-hydroxyacyl]-N-acetyl-alpha-D-glucosamine + H2O = a UDP-3-O-[(3R)-3-hydroxyacyl]-alpha-D-glucosamine + acetate. The protein operates within glycolipid biosynthesis; lipid IV(A) biosynthesis; lipid IV(A) from (3R)-3-hydroxytetradecanoyl-[acyl-carrier-protein] and UDP-N-acetyl-alpha-D-glucosamine: step 2/6. In terms of biological role, catalyzes the hydrolysis of UDP-3-O-myristoyl-N-acetylglucosamine to form UDP-3-O-myristoylglucosamine and acetate, the committed step in lipid A biosynthesis. This chain is UDP-3-O-acyl-N-acetylglucosamine deacetylase, found in Cupriavidus pinatubonensis (strain JMP 134 / LMG 1197) (Cupriavidus necator (strain JMP 134)).